The following is a 500-amino-acid chain: Cytochrome P450 monooxygenase ausR (500 aa).

The chain crosses the membrane as a helical span at residues Gly15 to Ala35. Cys439 serves as a coordination point for heme.

Belongs to the cytochrome P450 family. Heme serves as cofactor.

It localises to the membrane. It functions in the pathway secondary metabolite biosynthesis; terpenoid biosynthesis. Its function is as follows. Cytochrome P450 monooxygenase; part of the gene cluster that mediates the biosynthesis of calidodehydroaustin, a fungal meroterpenoid. The first step of the pathway is the synthesis of 3,5-dimethylorsellinic acid by the polyketide synthase ausA. 3,5-dimethylorsellinic acid is then prenylated by the polyprenyl transferase ausN. Further epoxidation by the FAD-dependent monooxygenase ausM and cyclization by the probable terpene cyclase ausL lead to the formation of protoaustinoid A. Protoaustinoid A is then oxidized to spiro-lactone preaustinoid A3 by the combined action of the FAD-binding monooxygenases ausB and ausC, and the dioxygenase ausE. Acid-catalyzed keto-rearrangement and ring contraction of the tetraketide portion of preaustinoid A3 by ausJ lead to the formation of preaustinoid A4. The aldo-keto reductase ausK, with the help of ausH, is involved in the next step by transforming preaustinoid A4 into isoaustinone which is in turn hydroxylated by the P450 monooxygenase ausI to form austinolide. The cytochrome P450 monooxygenase ausG modifies austinolide to austinol. Austinol is further acetylated to austin by the O-acetyltransferase ausP, which spontaneously changes to dehydroaustin. The cytochrome P450 monooxygenase ausR then converts dehydroaustin is into 7-dehydrodehydroaustin. The hydroxylation catalyzed by ausR permits the O-acetyltransferase ausQ to add an additional acetyl group to the molecule, leading to the formation of acetoxydehydroaustin. The short chain dehydrogenase ausT catalyzes the reduction of the double bond present between carbon atoms 1 and 2 to convert 7-dehydrodehydroaustin into 1,2-dihydro-7-hydroxydehydroaustin. AusQ catalyzes not only an acetylation reaction but also the addition of the PKS ausV diketide product to 1,2-dihydro-7-hydroxydehydroaustin, forming precalidodehydroaustin. Finally, the iron/alpha-ketoglutarate-dependent dioxygenase converts precalidodehydroaustin into calidodehydroaustin. This is Cytochrome P450 monooxygenase ausR from Aspergillus calidoustus.